The sequence spans 428 residues: 3-phosphoshikimate 1-carboxyvinyltransferase (428 aa).

3-phosphoshikimate is bound by residues Lys22, Ser23, and Arg27. Lys22 provides a ligand contact to phosphoenolpyruvate. 2 residues coordinate phosphoenolpyruvate: Gly94 and Arg122. 3-phosphoshikimate-binding residues include Ser168, Ser169, Gln170, Ser196, Asp315, and Lys342. Gln170 contacts phosphoenolpyruvate. The Proton acceptor role is filled by Asp315. Residues Arg346, Arg389, and Lys414 each coordinate phosphoenolpyruvate.

The protein belongs to the EPSP synthase family. In terms of assembly, monomer.

Its subcellular location is the cytoplasm. It catalyses the reaction 3-phosphoshikimate + phosphoenolpyruvate = 5-O-(1-carboxyvinyl)-3-phosphoshikimate + phosphate. Its pathway is metabolic intermediate biosynthesis; chorismate biosynthesis; chorismate from D-erythrose 4-phosphate and phosphoenolpyruvate: step 6/7. Catalyzes the transfer of the enolpyruvyl moiety of phosphoenolpyruvate (PEP) to the 5-hydroxyl of shikimate-3-phosphate (S3P) to produce enolpyruvyl shikimate-3-phosphate and inorganic phosphate. This Thiobacillus denitrificans (strain ATCC 25259 / T1) protein is 3-phosphoshikimate 1-carboxyvinyltransferase.